Here is a 194-residue protein sequence, read N- to C-terminus: Histone H1.0 (194 aa).

Met1 carries the post-translational modification N-acetylmethionine. Residues 1 to 11 are compositionally biased toward low complexity; the sequence is MTENSTSAPAA. A disordered region spans residues 1–28; it reads MTENSTSAPAAKPKRAKASKKSTDHPKY. Residue Thr2 is modified to N-acetylthreonine; in Histone H1.0, N-terminally processed. An H15 domain is found at 24 to 97; that stretch reads DHPKYSDMIV…GASGSFRLAK (74 aa). Position 42 is a citrulline (Arg42). The disordered stretch occupies residues 86–194; that stretch reads GVGASGSFRL…SSAKRASKKK (109 aa). The residue at position 104 (Ser104) is an ADP-ribosylserine. Residues 105 to 194 are compositionally biased toward basic residues; sequence VAFKKTKKEV…SSAKRASKKK (90 aa).

The protein belongs to the histone H1/H5 family. ADP-ribosylated on Ser-104 in response to DNA damage.

The protein localises to the nucleus. Its subcellular location is the chromosome. Histones H1 are necessary for the condensation of nucleosome chains into higher-order structures. The histones H1.0 are found in cells that are in terminal stages of differentiation or that have low rates of cell division. The polypeptide is Histone H1.0 (H1-0) (Mus musculus (Mouse)).